A 793-amino-acid chain; its full sequence is Protein smoothened (793 aa).

Positions 1-32 (MAAGRPVRGPELAPRRLLQLLLLVLLGGPGRG) are cleaved as a signal peptide. The Extracellular segment spans residues 33 to 237 (AALSGNVTGP…EAEHQDMHSY (205 aa)). Residues 35-61 (LSGNVTGPGPHSASGSSRRDVPVTSPP) form a disordered region. Asn-38 carries N-linked (GlcNAc...) asparagine glycosylation. 5 disulfide bridges follow: Cys-68–Cys-182, Cys-74–Cys-138, Cys-82–Cys-131, Cys-122–Cys-158, and Cys-151–Cys-173. The region spanning 69–185 (GRAAHCEPLR…DHFPEGCPNE (117 aa)) is the FZ domain. Asp-99 provides a ligand contact to cholesterol. N-linked (GlcNAc...) asparagine glycosylation occurs at Asn-192. Cystine bridges form between Cys-197/Cys-217, Cys-221/Cys-299, and Cys-318/Cys-394. A helical transmembrane segment spans residues 238–258 (IAAFGAVTGLCTLFTLATFVA). The Cytoplasmic segment spans residues 259–265 (DWRNSNR). The helical transmembrane segment at 266 to 286 (YPAVILFYVNACFFVGSIGWL) threads the bilayer. Over 287–318 (AQFMDGARREIVCRADGTMRFGEPTSSETLSC) the chain is Extracellular. A helical transmembrane segment spans residues 319–339 (VIIFVIVYYALMAGVVWFVVL). Over 340–362 (TYAWHTSFKALGTTYQPLSGKTS) the chain is Cytoplasmic. The chain crosses the membrane as a helical span at residues 363-383 (YFHLLTWSLPFVLTVAILAVA). Residues 384 to 406 (QVDGDSVSGICFVGYKNYRYRAG) are Extracellular-facing. Tyr-398 contacts cholesterol. A helical transmembrane segment spans residues 407 to 427 (FVLAPIGLVLIVGGYFLIRGV). The Cytoplasmic segment spans residues 428–455 (MTLFSIKSNHPGLLSEKAASKINETMLR). The helical transmembrane segment at 456 to 476 (LGIFGFLAFGFVLITFSCHFY) threads the bilayer. At 477–528 (DFFNQAEWERSFRDYVLCQANVTIGLPTKKPIPDCEIKNRPSLLVEKINLFA) the chain is on the extracellular side. The cysteines at positions 494 and 511 are disulfide-linked. Asn-497 carries N-linked (GlcNAc...) asparagine glycosylation. The helical transmembrane segment at 529–549 (MFGTGIAMSTWVWTKATLLIW) threads the bilayer. An interaction with BBS5 and BBS7 region spans residues 542–573 (TKATLLIWRRTWCRLTGHSDDEPKRIKKSKMI). The Cytoplasmic segment spans residues 550-793 (RRTWCRLTGH…AEILDADSDF (244 aa)). Residues Ser-560, Ser-578, and Ser-594 each carry the phosphoserine modification. Positions 574–657 (AKAFSKRREL…TPVPPEEQAN (84 aa)) are required for interaction with PRKACA. The tract at residues 585–597 (QNPGQELSFSMHT) is interaction with DLG5. Thr-597 is modified (phosphothreonine). A phosphoserine mark is found at Ser-599 and Ser-642. A phosphothreonine mark is found at Thr-644 and Thr-648. Ser-666 carries the post-translational modification Phosphoserine. A compositionally biased stretch (basic residues) spans 674–684 (GRKKKRRKRKK). The tract at residues 674-703 (GRKKKRRKRKKEVCPLRPAPELHHSAPVPA) is disordered.

This sequence belongs to the G-protein coupled receptor Fz/Smo family. As to quaternary structure, homodimer. Interacts (via C-terminus) with protein kinase A catalytic subunit PRKACA; interacts with free PRKACA subunits and the interaction leads to sequestration of PRKACA at the membrane, preventing PRKACA-mediated phosphorylation of GLI transcription factors. Interacts with ARRB2. Interacts with BBS5 and BBS7; the interactions are indicative for the association of SMO with the BBsome complex to facilitate ciliary localization of SMO. Interacts with KIF7, DLG5 and SDCBP. Interacts with GAS8/DRC4. Phosphorylation by GRK kinases is required for interaction with protein kinase A catalytic subunit PRKACA. During early somite stages of embryonic development, modestly up-regulated in the cells of the node (at protein level).

It is found in the cell membrane. Its subcellular location is the cell projection. The protein resides in the cilium. Functionally, g protein-coupled receptor which associates with the patched protein (PTCH) to transduce hedgehog protein signaling. Binding of sonic hedgehog (SHH) to its receptor patched prevents inhibition of smoothened (SMO) by patched. When active, SMO binds to and sequesters protein kinase A catalytic subunit PRKACA at the cell membrane, preventing PRKACA-mediated phosphorylation of GLI transcription factors which releases the GLI proteins from PRKACA-mediated inhibition and allows for transcriptional activation of hedgehog pathway target genes. Required for the accumulation of KIF7, GLI2 and GLI3 in the cilia. Interacts with DLG5 at the ciliary base to induce the accumulation of KIF7 and GLI2 at the ciliary tip for GLI2 activation. This chain is Protein smoothened (Smo), found in Mus musculus (Mouse).